A 177-amino-acid polypeptide reads, in one-letter code: MSRVAKSPVNLPKGVEVKIDGQKVAVKGGKGSLEHEVHELVAVSLEDGVVSVKPHDDSQKGWALAGTTRALLNNMVTGVADGFERKLQLLGVGYRAQAQGKVLNLTLGFSHPVAYQLPEGITVETPSQTEIVIKGIDKQLVGQVAANVRAFRPPEPYKGKGVRYADEQVRRKEAKKK.

Residues 154–177 (PEPYKGKGVRYADEQVRRKEAKKK) form a disordered region. The span at 155 to 171 (EPYKGKGVRYADEQVRR) shows a compositional bias: basic and acidic residues.

Belongs to the universal ribosomal protein uL6 family. Part of the 50S ribosomal subunit.

In terms of biological role, this protein binds to the 23S rRNA, and is important in its secondary structure. It is located near the subunit interface in the base of the L7/L12 stalk, and near the tRNA binding site of the peptidyltransferase center. The polypeptide is Large ribosomal subunit protein uL6 (Alcanivorax borkumensis (strain ATCC 700651 / DSM 11573 / NCIMB 13689 / SK2)).